The following is a 78-amino-acid chain: UPF0349 protein BH3414 (78 aa).

This sequence belongs to the UPF0349 family.

This Halalkalibacterium halodurans (strain ATCC BAA-125 / DSM 18197 / FERM 7344 / JCM 9153 / C-125) (Bacillus halodurans) protein is UPF0349 protein BH3414.